The primary structure comprises 180 residues: Large ribosomal subunit protein uL6 (180 aa).

The protein belongs to the universal ribosomal protein uL6 family. Part of the 50S ribosomal subunit.

In terms of biological role, this protein binds to the 23S rRNA, and is important in its secondary structure. It is located near the subunit interface in the base of the L7/L12 stalk, and near the tRNA binding site of the peptidyltransferase center. The chain is Large ribosomal subunit protein uL6 from Prosthecochloris aestuarii (strain DSM 271 / SK 413).